We begin with the raw amino-acid sequence, 483 residues long: Beta-glucosidase 4 (483 aa).

Residues Gln29, His131, 176-177, Tyr310, and Glu380 contribute to the a beta-D-glucoside site; that span reads NE. Glu177 (proton donor) is an active-site residue. The Nucleophile role is filled by Glu380. N-linked (GlcNAc...) asparagine glycosylation occurs at Asn398. A beta-D-glucoside is bound by residues Trp429, 436 to 437, and Phe445; that span reads EW.

This sequence belongs to the glycosyl hydrolase 1 family.

The catalysed reaction is Hydrolysis of terminal, non-reducing beta-D-glucosyl residues with release of beta-D-glucose.. In Oryza sativa subsp. japonica (Rice), this protein is Beta-glucosidase 4 (BGLU4).